A 514-amino-acid chain; its full sequence is 2,3-bisphosphoglycerate-independent phosphoglycerate mutase (514 aa).

Mn(2+) contacts are provided by Asp-14 and Ser-64. Ser-64 functions as the Phosphoserine intermediate in the catalytic mechanism. Residues His-125, 155–156 (RD), Arg-187, Arg-193, 263–266 (RADR), and Lys-336 each bind substrate. Mn(2+) is bound by residues Asp-403, His-407, Asp-444, His-445, and His-463.

It belongs to the BPG-independent phosphoglycerate mutase family. In terms of assembly, monomer. The cofactor is Mn(2+).

It carries out the reaction (2R)-2-phosphoglycerate = (2R)-3-phosphoglycerate. It functions in the pathway carbohydrate degradation; glycolysis; pyruvate from D-glyceraldehyde 3-phosphate: step 3/5. Catalyzes the interconversion of 2-phosphoglycerate and 3-phosphoglycerate. The chain is 2,3-bisphosphoglycerate-independent phosphoglycerate mutase from Shewanella sp. (strain MR-7).